The primary structure comprises 333 residues: Anthranilate phosphoribosyltransferase (333 aa).

5-phospho-alpha-D-ribose 1-diphosphate-binding positions include G81, 84-85 (GD), T89, 91-94 (NIST), 109-117 (KHGNRSVSS), and A121. An anthranilate-binding site is contributed by G81. S93 contacts Mg(2+). Position 112 (N112) interacts with anthranilate. Anthranilate is bound at residue R167. Mg(2+) is bound by residues D225 and E226.

This sequence belongs to the anthranilate phosphoribosyltransferase family. In terms of assembly, homodimer. It depends on Mg(2+) as a cofactor.

The enzyme catalyses N-(5-phospho-beta-D-ribosyl)anthranilate + diphosphate = 5-phospho-alpha-D-ribose 1-diphosphate + anthranilate. It functions in the pathway amino-acid biosynthesis; L-tryptophan biosynthesis; L-tryptophan from chorismate: step 2/5. In terms of biological role, catalyzes the transfer of the phosphoribosyl group of 5-phosphorylribose-1-pyrophosphate (PRPP) to anthranilate to yield N-(5'-phosphoribosyl)-anthranilate (PRA). The chain is Anthranilate phosphoribosyltransferase from Haemophilus influenzae (strain PittEE).